A 199-amino-acid chain; its full sequence is Single-stranded DNA cytosine deaminase (199 aa).

A Bipartite nuclear localization signal motif is present at residues methionine 1 to cysteine 30. Positions aspartate 2–glutamate 26 are interaction with SUPT6H. One can recognise a CMP/dCMP-type deaminase domain in the interval glycine 23–leucine 130. Residue threonine 27 is modified to Phosphothreonine; by PKA. Residue serine 38 is modified to Phosphoserine; by PKA. The tract at residues proline 39–phenylalanine 42 is important for interaction with CTNNBL1. Histidine 56 is a Zn(2+) binding site. Residue glutamate 58 is the Proton donor of the active site. Zn(2+) contacts are provided by cysteine 87 and cysteine 90. A required for interaction with RNF126 region spans residues tyrosine 88–cysteine 116. A Nuclear export signal motif is present at residues leucine 184–leucine 199.

Belongs to the cytidine and deoxycytidylate deaminase family. As to quaternary structure, interacts with CTNNBL1; the interaction is important for the immunoglobulin switch activity of AICDA. Interacts (via its NLS) with KPNA1. Interacts with PKA/PRKACA and PRKAR1A/PKR1. Interacts with SUPT6H, TRIM28 and NCL. Directly interacts with MCM3AP; this interaction may favor AICDA recruitment to immunoglobulin variable region genes, hence promoting somatic hypermutations. It depends on Zn(2+) as a cofactor. Post-translationally, ser-38 is the major site whereas Thr-27 is the minor site of phosphorylation. Phosphorylation regulates its class-switch recombination activity. Probably monoubiquitinated on several residues by RNF126. As to expression, expressed in lymph nodes, spleen and thymus.

The protein localises to the nucleus. It is found in the cytoplasm. The enzyme catalyses a 2'-deoxycytidine in single-stranded DNA + H2O + H(+) = a 2'-deoxyuridine in single-stranded DNA + NH4(+). Functionally, single-stranded DNA-specific cytidine deaminase. Involved in somatic hypermutation (SHM), gene conversion, and class-switch recombination (CSR) in B-lymphocytes by deaminating C to U during transcription of Ig-variable (V) and Ig-switch (S) region DNA. Required for several crucial steps of B-cell terminal differentiation necessary for efficient antibody responses. May also play a role in the epigenetic regulation of gene expression by participating in DNA demethylation. In Bos taurus (Bovine), this protein is Single-stranded DNA cytosine deaminase (AICDA).